Here is a 254-residue protein sequence, read N- to C-terminus: DNA repair protein RecO (254 aa).

Belongs to the RecO family.

Involved in DNA repair and RecF pathway recombination. In Anaeromyxobacter dehalogenans (strain 2CP-C), this protein is DNA repair protein RecO.